Here is a 525-residue protein sequence, read N- to C-terminus: GMP synthase [glutamine-hydrolyzing] (525 aa).

Residues 9–207 (RILILDFGSQ…VRDICQCEAL (199 aa)) form the Glutamine amidotransferase type-1 domain. The active-site Nucleophile is the Cys-86. Catalysis depends on residues His-181 and Glu-183. The region spanning 208–400 (WTPAKIIDDA…LGLPYDMLYR (193 aa)) is the GMPS ATP-PPase domain. 235 to 241 (SGGVDSS) is a binding site for ATP.

As to quaternary structure, homodimer.

The catalysed reaction is XMP + L-glutamine + ATP + H2O = GMP + L-glutamate + AMP + diphosphate + 2 H(+). It participates in purine metabolism; GMP biosynthesis; GMP from XMP (L-Gln route): step 1/1. In terms of biological role, catalyzes the synthesis of GMP from XMP. The chain is GMP synthase [glutamine-hydrolyzing] from Escherichia fergusonii (strain ATCC 35469 / DSM 13698 / CCUG 18766 / IAM 14443 / JCM 21226 / LMG 7866 / NBRC 102419 / NCTC 12128 / CDC 0568-73).